We begin with the raw amino-acid sequence, 440 residues long: Protein disulfide-isomerase 2-3 (440 aa).

The signal sequence occupies residues 1-24 (MYKSPLTLLTLLTICFGFFDLSSA). Thioredoxin domains lie at 25 to 136 (LYGS…KQIK) and 154 to 269 (SKEK…ELVE). Residues cysteine 60 and cysteine 63 each act as nucleophile in the active site. Residues cysteine 60 and cysteine 63 are joined by a disulfide bond. Residues 143-163 (LEGKSKPTGGGSKEKKSEPSA) form a disordered region. A glycan (N-linked (GlcNAc...) asparagine) is linked at asparagine 168. Residues cysteine 192 and cysteine 195 each act as nucleophile in the active site. Cysteine 192 and cysteine 195 are joined by a disulfide. The Prevents secretion from ER signature appears at 437 to 440 (KDEL).

This sequence belongs to the protein disulfide isomerase family. Widely expressed.

It is found in the endoplasmic reticulum lumen. The catalysed reaction is Catalyzes the rearrangement of -S-S- bonds in proteins.. In terms of biological role, acts as a protein-folding catalyst that interacts with nascent polypeptides to catalyze the formation, isomerization, and reduction or oxidation of disulfide bonds. The protein is Protein disulfide-isomerase 2-3 (PDIL2-3) of Arabidopsis thaliana (Mouse-ear cress).